A 635-amino-acid chain; its full sequence is MNQLEEIVKYVIYKCRENNHPVTETLAAFVTQTIYNPKTDRFYLEDKLTASQVDELKATVLQKLSQIDKPNMKTIQMQISYDSAYIESEIQRQERIKNQSIETGKLTDEVVSLEIKNAKDFEGLTVLFKKIFNFLLYKNKELMYDGTNKTGNQDSENQATQFNIEKEVAAGLESVIPRAALGPFVSLNPSEKVTQLVELSNLVIGIRLFNKWIQKGGIGLVPFQDLLEYEGRDLIERIRQEAFEVIENCDNYTIFFQNVGPGKIKISDEQFKQYKDELTFLRQYLSYILSIQEDVDISENSVDSNQTRYLKEIKDLETLLKQKSSAPKEQVYPKFATLAQAYIQLLEEKKLCLTRVKLFELLQEMRKGFKLTLPRNLILTAKNISQDPSNEEQVEIEYSEDCGIERLLPKNTPDFMQTPLDYLGFCLWSIVKRDGLLLPGKPALGVFRYKDKNCVFSDEKSINEFLSDPQQFIQGVINQCRKNPELIHLLRMDDSFKNVNLNIYVSGQEGGHQLSNKLMVDKGIETPLHFVEKRLDPNYCWNEWELRKKALQMANIRKRQTKACQTILSNFKVDSEAQTYLPKDNETNTGKTEWDIRKFAIEQAKKKGIIAGTDRAPYPIHPRNYITGLRDKDTN.

It belongs to the CFAP206 family.

The protein resides in the cytoplasm. It is found in the cytoskeleton. The protein localises to the cilium axoneme. Its function is as follows. May regulate cilium motility through its role in the assembly of the axonemal RS2 radial spoke. The polypeptide is Cilia- and flagella-associated protein 206 (Tetrahymena thermophila (strain SB210)).